We begin with the raw amino-acid sequence, 101 residues long: Small ubiquitin-related modifier 1 (101 aa).

At serine 2 the chain carries N-acetylserine. Phosphoserine is present on serine 2. A Glycyl lysine isopeptide (Lys-Gly) (interchain with G-Cter in SUMO1); alternate cross-link involves residue lysine 7. Lysine 7 is covalently cross-linked (Glycyl lysine isopeptide (Lys-Gly) (interchain with G-Cter in SUMO2); alternate). Serine 9 carries the phosphoserine modification. Residues lysine 16, lysine 17, and lysine 23 each participate in a glycyl lysine isopeptide (Lys-Gly) (interchain with G-Cter in SUMO2) cross-link. Residues 20 to 97 enclose the Ubiquitin-like domain; it reads EYIKLKVIGQ…IEVYHEQTGG (78 aa). Lysine 25 participates in a covalent cross-link: Glycyl lysine isopeptide (Lys-Gly) (interchain with G-Cter in SUMO1). Residue serine 32 is modified to Phosphoserine. Residues lysine 37, lysine 39, lysine 45, and lysine 46 each participate in a glycyl lysine isopeptide (Lys-Gly) (interchain with G-Cter in SUMO2) cross-link. Residue glycine 97 forms a Glycyl lysine isopeptide (Gly-Lys) (interchain with K-? in acceptor proteins) linkage. The propeptide occupies 98 to 101; it reads HSTV.

It belongs to the ubiquitin family. SUMO subfamily. Covalently attached to KCNB1; UBE2I increases cross-linking with KCNB1 and PIAS1 decreases cross-links with KCNB1. Interacts with SAE2, RANBP2, PIAS1 and PIAS2. Interacts with PRKN. Covalently attached to a number of proteins such as IKFZ1, PML, RANGAP1, HIPK2, SP100, p53, p73-alpha, MDM2, JUN, DNMT3B and TDG. Also interacts with HIF1A, HIPK2, HIPK3, CHD3, EXOSC9, RAD51 and RAD52. Interacts with USP25 (via ts SIM domain); the interaction weakly sumoylates USP25. Interacts with SIMC1, CASP8AP2, RNF111 and SOBP (via SIM domains). Interacts with BHLHE40/DEC1. Interacts with RWDD3. Interacts with UBE2I/UBC9 and this interaction is enhanced in the presence of RWDD3. Interacts with MTA1. Interacts with SENP2. Interacts with HINT1. In terms of processing, cleavage of precursor form by SENP1, SENP2 is necessary for function. Post-translationally, polymeric SUMO1 chains undergo polyubiquitination by RNF4.

The protein localises to the nucleus membrane. It is found in the nucleus speckle. The protein resides in the cytoplasm. It localises to the nucleus. Its subcellular location is the PML body. The protein localises to the cell membrane. In terms of biological role, ubiquitin-like protein that can be covalently attached to proteins as a monomer or a lysine-linked polymer. Covalent attachment via an isopeptide bond to its substrates requires prior activation by the E1 complex SAE1-SAE2 and linkage to the E2 enzyme UBE2I, and can be promoted by E3 ligases such as PIAS1-4, RANBP2 or CBX4. This post-translational modification on lysine residues of proteins plays a crucial role in a number of cellular processes such as nuclear transport, DNA replication and repair, mitosis and signal transduction. Involved for instance in targeting RANGAP1 to the nuclear pore complex protein RANBP2. Covalently attached to the voltage-gated potassium channel KCNB1; this modulates the gating characteristics of KCNB1. Polymeric SUMO1 chains are also susceptible to polyubiquitination which functions as a signal for proteasomal degradation of modified proteins. May also regulate a network of genes involved in palate development. Covalently attached to ZFHX3. The polypeptide is Small ubiquitin-related modifier 1 (SUMO1) (Cervus nippon (Sika deer)).